Here is a 224-residue protein sequence, read N- to C-terminus: Heme response regulator HssR (224 aa).

The Response regulatory domain occupies Q3 to L116. 4-aspartylphosphate is present on D52. A DNA-binding region (ompR/PhoB-type) is located at residues N124–N222.

In terms of processing, phosphorylated by HssS.

Its subcellular location is the cytoplasm. Member of the two-component regulatory system HssS/HssR involved in intracellular heme homeostasis and tempering of staphylococcal virulence. Phosphorylated HssR binds to a direct repeat sequence within hrtAB promoter and activates the expression of hrtAB, an efflux pump, in response to extracellular heme, hemin, hemoglobin or blood. The protein is Heme response regulator HssR (hssR) of Staphylococcus aureus (strain MRSA252).